The sequence spans 349 residues: tRNA-specific 2-thiouridylase MnmA (349 aa).

ATP-binding positions include 7–14 (GLSGGVDS) and Leu-33. Catalysis depends on Cys-94, which acts as the Nucleophile. A disulfide bond links Cys-94 and Cys-193. Residue Gly-119 coordinates ATP. The segment at 143–145 (KDQ) is interaction with tRNA. Cys-193 (cysteine persulfide intermediate) is an active-site residue. The interval 298–299 (RY) is interaction with tRNA.

Belongs to the MnmA/TRMU family.

The protein localises to the cytoplasm. It catalyses the reaction S-sulfanyl-L-cysteinyl-[protein] + uridine(34) in tRNA + AH2 + ATP = 2-thiouridine(34) in tRNA + L-cysteinyl-[protein] + A + AMP + diphosphate + H(+). Functionally, catalyzes the 2-thiolation of uridine at the wobble position (U34) of tRNA, leading to the formation of s(2)U34. The chain is tRNA-specific 2-thiouridylase MnmA from Gloeothece citriformis (strain PCC 7424) (Cyanothece sp. (strain PCC 7424)).